We begin with the raw amino-acid sequence, 393 residues long: Endoglucanase 1 (393 aa).

A signal peptide spans 1–26 (MAFKLNIGLLALSLSLSLVHLDGVRA). Asp-34 acts as the Nucleophile in catalysis. Asp-152 functions as the Proton donor in the catalytic mechanism. The tract at residues 233–393 (GCQRKDDNTI…GGHKKCHKKH (161 aa)) is disordered. 2 stretches are compositionally biased toward low complexity: residues 319-329 (QGSSNGDATTG) and 337-370 (DSGSTANGSGSGAPTSGSDGSAVAPPSGGSNPGA). An N-linked (GlcNAc...) asparagine glycan is attached at Asn-343. Over residues 371-384 (AQGGQGGAQPGPSG) the composition is skewed to gly residues.

The protein belongs to the glycosyl hydrolase 45 (cellulase K) family. Post-translationally, may also be O-glycosylated. Hyphal tip.

The protein localises to the secreted. It carries out the reaction Endohydrolysis of (1-&gt;4)-beta-D-glucosidic linkages in cellulose, lichenin and cereal beta-D-glucans.. The polypeptide is Endoglucanase 1 (EGL1) (Mycosarcoma maydis (Corn smut fungus)).